The chain runs to 88 residues: Small ribosomal subunit protein bS20 (88 aa).

It belongs to the bacterial ribosomal protein bS20 family.

In terms of biological role, binds directly to 16S ribosomal RNA. The polypeptide is Small ribosomal subunit protein bS20 (Bartonella quintana (strain Toulouse) (Rochalimaea quintana)).